A 910-amino-acid polypeptide reads, in one-letter code: Coatomer subunit beta'-2 (910 aa).

9 WD repeats span residues 13-52, 55-94, 97-136, 140-180, 183-224, 227-266, 269-309, 351-393, and 461-501; these read QRSE…MVKS, VTEL…KVKV, AHTD…MCTQ, GHSH…PNFT, GHSK…CVQT, GHAH…LENT, YGLE…ASMD, TCDL…GSAL, and RIDV…SHLD. The tract at residues 882–910 is disordered; sequence ADGSTDGAVLVNGNDTEEQWGTNNEESSA. A compositionally biased stretch (polar residues) spans 900 to 910; sequence QWGTNNEESSA.

The protein belongs to the WD repeat COPB2 family. In terms of assembly, oligomeric complex that consists of at least the alpha, beta, beta', gamma, delta, epsilon and zeta subunits.

The protein localises to the cytoplasm. Its subcellular location is the golgi apparatus membrane. It localises to the cytoplasmic vesicle. The protein resides in the COPI-coated vesicle membrane. The coatomer is a cytosolic protein complex that binds to dilysine motifs and reversibly associates with Golgi non-clathrin-coated vesicles, which further mediate biosynthetic protein transport from the ER, via the Golgi up to the trans Golgi network. Coatomer complex is required for budding from Golgi membranes, and is essential for the retrograde Golgi-to-ER transport of dilysine-tagged proteins. The polypeptide is Coatomer subunit beta'-2 (Oryza sativa subsp. japonica (Rice)).